Reading from the N-terminus, the 404-residue chain is Cysteine desulfurase IscS (404 aa).

Residues 75–76 (AT), Asn155, Gln183, and 203–205 (TGH) each bind pyridoxal 5'-phosphate. Lys206 bears the N6-(pyridoxal phosphate)lysine mark. Thr243 provides a ligand contact to pyridoxal 5'-phosphate. Cys328 (cysteine persulfide intermediate) is an active-site residue. Cys328 contacts [2Fe-2S] cluster.

It belongs to the class-V pyridoxal-phosphate-dependent aminotransferase family. NifS/IscS subfamily. As to quaternary structure, homodimer. Forms a heterotetramer with IscU, interacts with other sulfur acceptors. It depends on pyridoxal 5'-phosphate as a cofactor.

The protein localises to the cytoplasm. The enzyme catalyses (sulfur carrier)-H + L-cysteine = (sulfur carrier)-SH + L-alanine. The protein operates within cofactor biosynthesis; iron-sulfur cluster biosynthesis. In terms of biological role, master enzyme that delivers sulfur to a number of partners involved in Fe-S cluster assembly, tRNA modification or cofactor biosynthesis. Catalyzes the removal of elemental sulfur atoms from cysteine to produce alanine. Functions as a sulfur delivery protein for Fe-S cluster synthesis onto IscU, an Fe-S scaffold assembly protein, as well as other S acceptor proteins. In Enterobacter sp. (strain 638), this protein is Cysteine desulfurase IscS.